Reading from the N-terminus, the 336-residue chain is Dihydroorotate dehydrogenase (quinone) (336 aa).

FMN-binding positions include 62–66 (AGLDK) and Thr-86. Position 66 (Lys-66) interacts with substrate. 111–115 (NRMGF) contacts substrate. FMN contacts are provided by Asn-139 and Asn-172. Position 172 (Asn-172) interacts with substrate. Ser-175 (nucleophile) is an active-site residue. Residue Asn-177 coordinates substrate. 2 residues coordinate FMN: Lys-217 and Thr-245. 246–247 (NT) provides a ligand contact to substrate. FMN-binding positions include Gly-268, Gly-297, and 318–319 (YS).

This sequence belongs to the dihydroorotate dehydrogenase family. Type 2 subfamily. As to quaternary structure, monomer. FMN is required as a cofactor.

The protein localises to the cell membrane. It catalyses the reaction (S)-dihydroorotate + a quinone = orotate + a quinol. It functions in the pathway pyrimidine metabolism; UMP biosynthesis via de novo pathway; orotate from (S)-dihydroorotate (quinone route): step 1/1. Catalyzes the conversion of dihydroorotate to orotate with quinone as electron acceptor. This Salmonella choleraesuis (strain SC-B67) protein is Dihydroorotate dehydrogenase (quinone).